The following is a 158-amino-acid chain: Transcription elongation factor GreA (158 aa).

The protein belongs to the GreA/GreB family.

Its function is as follows. Necessary for efficient RNA polymerase transcription elongation past template-encoded arresting sites. The arresting sites in DNA have the property of trapping a certain fraction of elongating RNA polymerases that pass through, resulting in locked ternary complexes. Cleavage of the nascent transcript by cleavage factors such as GreA or GreB allows the resumption of elongation from the new 3'terminus. GreA releases sequences of 2 to 3 nucleotides. The protein is Transcription elongation factor GreA of Baumannia cicadellinicola subsp. Homalodisca coagulata.